Here is a 517-residue protein sequence, read N- to C-terminus: Variant surface glycoprotein MVAT5 (517 aa).

The signal sequence occupies residues 1–21; the sequence is MIGKAFIILSLLNELPTPTAA. Cystine bridges form between Cys417/Cys430 and Cys426/Cys443. An N-linked (GlcNAc...) asparagine glycan is attached at Asn435. Residues 454–470 show a composition bias toward low complexity; the sequence is QAAQTAGAGEGAAGTTT. The disordered stretch occupies residues 454–487; sequence QAAQTAGAGEGAAGTTTDKCKDKKKDDCKSPDCK. Over residues 471–487 the composition is skewed to basic and acidic residues; sequence DKCKDKKKDDCKSPDCK. The GPI-anchor amidated aspartate moiety is linked to residue Asp495. A propeptide spans 496–517 (removed in mature form); it reads SSILLNKQFALMVSAAFVALLF.

It is found in the cell membrane. Functionally, VSG forms a coat on the surface of the parasite. The trypanosome evades the immune response of the host by expressing a series of antigenically distinct VSGs from an estimated 1000 VSG genes. The sequence is that of Variant surface glycoprotein MVAT5 from Trypanosoma brucei rhodesiense.